A 202-amino-acid polypeptide reads, in one-letter code: Cold-regulated 413 plasma membrane protein 4 (202 aa).

The Extracellular segment spans residues 1–42 (MGRGEFLAMKTEENAANLINSDMNEFVAAAKKLVKDVGMLGG). The helical transmembrane segment at 43 to 63 (VGFGTSVLQWAASIFAIYLLI) threads the bilayer. The Cytoplasmic portion of the chain corresponds to 64-72 (LDRTNWKTK). A helical transmembrane segment spans residues 73–93 (MLTTLLVPYIFFTLPSVIFQF). Residues 94–97 (FSGD) lie on the Extracellular side of the membrane. Residues 98–118 (FGKWIALIAIIVRLFFPKEFP) traverse the membrane as a helical segment. A topological domain (cytoplasmic) is located at residue E119. The chain crosses the membrane as a helical span at residues 120–140 (WLEIPVALILIVVVSPSLIAW). Residues 141-145 (TLRES) lie on the Extracellular side of the membrane. A helical transmembrane segment spans residues 146–166 (WVGAVICLVIACYLFHEHIKA). At 167–181 (SGGFKNSFTQKNGIS) the chain is on the cytoplasmic side. The chain crosses the membrane as a helical span at residues 182-202 (NTIGIVALLVYPVWTIFFHIF).

Belongs to the Cold-regulated 413 protein family.

It localises to the cell membrane. The protein is Cold-regulated 413 plasma membrane protein 4 of Arabidopsis thaliana (Mouse-ear cress).